The chain runs to 64 residues: Large ribosomal subunit protein bL33c (64 aa).

Belongs to the bacterial ribosomal protein bL33 family.

Its subcellular location is the plastid. It localises to the chloroplast. This is Large ribosomal subunit protein bL33c (rpl33) from Cyanidium caldarium (Red alga).